Consider the following 85-residue polypeptide: U4-theraphotoxin-Hhn1p (85 aa).

Positions 1–22 (MKMTLIAIPTCAAVLVLHTTAA) are cleaved as a signal peptide. The propeptide occupies 23–48 (EELEAESQLMEVGMPDTELEAVDGER). Cystine bridges form between cysteine 52–cysteine 66, cysteine 56–cysteine 77, and cysteine 71–cysteine 82.

It belongs to the neurotoxin 12 (Hwtx-2) family. 02 (Hwtx-2) subfamily. Expressed by the venom gland.

It is found in the secreted. In terms of biological role, postsynaptic neurotoxin. The sequence is that of U4-theraphotoxin-Hhn1p from Cyriopagopus hainanus (Chinese bird spider).